The sequence spans 301 residues: Acetylglutamate kinase (301 aa).

Substrate is bound by residues 68 to 69 (GG), Arg-90, and Asn-195.

The protein belongs to the acetylglutamate kinase family. ArgB subfamily.

It localises to the cytoplasm. It catalyses the reaction N-acetyl-L-glutamate + ATP = N-acetyl-L-glutamyl 5-phosphate + ADP. Its pathway is amino-acid biosynthesis; L-arginine biosynthesis; N(2)-acetyl-L-ornithine from L-glutamate: step 2/4. Functionally, catalyzes the ATP-dependent phosphorylation of N-acetyl-L-glutamate. The chain is Acetylglutamate kinase from Pseudomonas fluorescens (strain Pf0-1).